We begin with the raw amino-acid sequence, 728 residues long: Protein Hook homolog 1 (728 aa).

N-acetylmethionine is present on Met-1. A sufficient for interaction with microtubules region spans residues 1–555; that stretch reads MEDPQPLPQS…LKQKLEAHME (555 aa). Positions 12 to 128 constitute a Calponin-homology (CH) domain; it reads LPLCDSLIIW…RLLQLILGCA (117 aa). Coiled-coil stretches lie at residues 168–443 and 477–658; these read PASD…LNQA and LRLQ…AKLR. Ser-235 is subject to Phosphoserine. Residues 481 to 510 form a disordered region; the sequence is QEGTENERIEQLQEQLEQKHRKMNELETEQ. Residues 657 to 728 are sufficient for interaction with AKTIP and VPS18; it reads LRDYEEKLIV…SVKVPAAASD (72 aa). A phosphoserine mark is found at Ser-719 and Ser-727.

It belongs to the hook family. As to quaternary structure, self-associates. Component of the FTS/Hook/FHIP complex (FHF complex), composed of AKTIP/FTS, FHIP1B, and one or more members of the Hook family of proteins HOOK1, HOOK2, and HOOK3. Interacts directly with AKTIP/FTS, HOOK2 and HOOK3. Associates with several subunits of the homotypic vesicular sorting complex (the HOPS complex) including VPS16, VPS18, VPS39 and VPS41; these interactions may be indirect. Interacts with CCDC181. Interacts (via coiled-coil region) with RIMBP3 (via C-terminus). Interacts with LRGUK (via guanylate kinase-like domain). Interacts with microtubules. May interacts with CLN3. Interacts with AP4M1; the interaction is direct, mediates the interaction between FTS-Hook-FHIP (FHF) complex and AP-4 and the perinuclear distribution of AP-4. As to expression, mainly expressed in testis.

It is found in the cytoplasm. Its subcellular location is the cytoskeleton. In terms of biological role, component of the FTS/Hook/FHIP complex (FHF complex). The FHF complex may function to promote vesicle trafficking and/or fusion via the homotypic vesicular protein sorting complex (the HOPS complex). FHF complex promotes the distribution of AP-4 complex to the perinuclear area of the cell. Required for spermatid differentiation. Probably involved in the positioning of the microtubules of the manchette and the flagellum in relation to the membrane skeleton. This Mus musculus (Mouse) protein is Protein Hook homolog 1 (Hook1).